The chain runs to 360 residues: 3-dehydroquinate synthase (360 aa).

Residues 71 to 76, 105 to 109, 129 to 130, Lys142, Lys151, and 169 to 172 contribute to the NAD(+) site; these read DGEQYK, GVVGD, TT, and TLNT. Positions 184, 248, and 265 each coordinate Zn(2+).

The protein belongs to the sugar phosphate cyclases superfamily. Dehydroquinate synthase family. Requires Co(2+) as cofactor. It depends on Zn(2+) as a cofactor. The cofactor is NAD(+).

The protein localises to the cytoplasm. The enzyme catalyses 7-phospho-2-dehydro-3-deoxy-D-arabino-heptonate = 3-dehydroquinate + phosphate. The protein operates within metabolic intermediate biosynthesis; chorismate biosynthesis; chorismate from D-erythrose 4-phosphate and phosphoenolpyruvate: step 2/7. Its function is as follows. Catalyzes the conversion of 3-deoxy-D-arabino-heptulosonate 7-phosphate (DAHP) to dehydroquinate (DHQ). The sequence is that of 3-dehydroquinate synthase from Coxiella burnetii (strain RSA 331 / Henzerling II).